Consider the following 572-residue polypeptide: MAFNFNWSPLMADASFYTRAQDLLTAALNKSPKPPIIVDDIIVTELNLGSIPPELEILEIGDLAEDRFRGIFKMSYSGDAFLTLKTRVQANPLNTYLLTRPSFATPRPLAAATPLTIPLQITLSDFKLSGFVILVFSKQKGITVVFRNDPLESLKVSSTFDSIPFVRDFLQKEIEAQLRILFMDELPAIIHRLSLRLWVPEYRAGEELQTQTASANGEGPGQDPLASPPQDPVDALGNALNESEIESLSLDSSVETHSLFSQKNLLRLAALTDSQRTLSLFTPSIREVVYRAWTSPSDQTDASGSVTSPFFPVLSRTQSQVGSMSSFPDSASMVSSQSRSSTPFHTFSGYGLSLGAGRHSKAHARKRKKRVVDLRRPKTTDDAPSVSDESSFTESTSAPSICSAPLPVLDEQTDDPVTPPLSPDNDLHLPAIPERHRMSISRPALRRENASEMIRDTAECKPSSNAVGQAIQEEDLSATPRAAVRAHGASVLEKGKQDPDSSAGSSRQLSSTILPFINDNPTGGVVDQALVERLAGEIARRMRDEKFMASNACGPFWDRHSQEESPPPAYGH.

Residues 1–195 enclose the SMP-LTD domain; it reads MAFNFNWSPL…LPAIIHRLSL (195 aa). Disordered regions lie at residues 212-236, 355-426, 487-507, and 552-572; these read TASA…VDAL, GAGR…PDND, HGAS…GSSR, and ACGP…AYGH. Basic residues predominate over residues 358–370; that stretch reads RHSKAHARKRKKR. A compositionally biased stretch (basic and acidic residues) spans 371–381; it reads VVDLRRPKTTD. Residues 387–400 show a composition bias toward polar residues; the sequence is SDESSFTESTSAPS.

Belongs to the MDM34 family. As to quaternary structure, component of the ER-mitochondria encounter structure (ERMES) or MDM complex, composed of mmm1, mdm10, mdm12 and mdm34.

The protein resides in the mitochondrion outer membrane. Functionally, component of the ERMES/MDM complex, which serves as a molecular tether to connect the endoplasmic reticulum (ER) and mitochondria. Components of this complex are involved in the control of mitochondrial shape and protein biogenesis, and function in nonvesicular lipid trafficking between the ER and mitochondria. Mdm34 is required for the interaction of the ER-resident membrane protein mmm1 and the outer mitochondrial membrane-resident beta-barrel protein mdm10. The chain is Mitochondrial distribution and morphology protein 34 from Aspergillus fumigatus (strain ATCC MYA-4609 / CBS 101355 / FGSC A1100 / Af293) (Neosartorya fumigata).